A 442-amino-acid polypeptide reads, in one-letter code: Cytochrome c biogenesis protein CcsB (442 aa).

3 consecutive transmembrane segments (helical) span residues 17–37 (LRLA…GTVI), 76–96 (TPWY…CTLT), and 162–182 (LGPI…ILGA).

This sequence belongs to the Ccs1/CcsB family. May interact with CcsA.

The protein localises to the cellular thylakoid membrane. Required during biogenesis of c-type cytochromes (cytochrome c6 and cytochrome f) at the step of heme attachment. The chain is Cytochrome c biogenesis protein CcsB from Thermosynechococcus vestitus (strain NIES-2133 / IAM M-273 / BP-1).